Consider the following 227-residue polypeptide: uncharacterized protein (227 aa).

An N-terminal signal peptide occupies residues 1-23 (MKKLTVTFLTFISIFFAATAAFA).

This is an uncharacterized protein from Coxiella burnetii (strain RSA 493 / Nine Mile phase I).